A 946-amino-acid polypeptide reads, in one-letter code: Protein translocase subunit SecA (946 aa).

ATP-binding positions include glutamine 89, 107 to 111 (GEGKT), and aspartate 508. A disordered region spans residues 534–569 (PEDSHKPPVPLQRRKDSSVGFGKEENNSKDKKVNHS). Over residues 546–569 (RRKDSSVGFGKEENNSKDKKVNHS) the composition is skewed to basic and acidic residues.

This sequence belongs to the SecA family. As to quaternary structure, monomer and homodimer. Part of the essential Sec protein translocation apparatus which comprises SecA, SecYEG and auxiliary proteins SecDF. Other proteins may also be involved.

The protein resides in the cell inner membrane. It is found in the cellular thylakoid membrane. It localises to the cytoplasm. It carries out the reaction ATP + H2O + cellular proteinSide 1 = ADP + phosphate + cellular proteinSide 2.. In terms of biological role, part of the Sec protein translocase complex. Interacts with the SecYEG preprotein conducting channel. Has a central role in coupling the hydrolysis of ATP to the transfer of proteins into and across the cell membrane, serving as an ATP-driven molecular motor driving the stepwise translocation of polypeptide chains across the membrane. Probably participates in protein translocation into and across both the cytoplasmic and thylakoid membranes in cyanobacterial cells. The chain is Protein translocase subunit SecA from Prochlorococcus marinus (strain SARG / CCMP1375 / SS120).